Here is a 343-residue protein sequence, read N- to C-terminus: Anthranilate phosphoribosyltransferase (343 aa).

5-phospho-alpha-D-ribose 1-diphosphate contacts are provided by residues G86, G89–D90, T94, N96–T99, K114–G122, and S126. Anthranilate is bound at residue G86. Residue S98 coordinates Mg(2+). N117 is an anthranilate binding site. Anthranilate is bound at residue R172. The Mg(2+) site is built by D231 and E232.

Belongs to the anthranilate phosphoribosyltransferase family. As to quaternary structure, homodimer. Mg(2+) is required as a cofactor.

The enzyme catalyses N-(5-phospho-beta-D-ribosyl)anthranilate + diphosphate = 5-phospho-alpha-D-ribose 1-diphosphate + anthranilate. Its pathway is amino-acid biosynthesis; L-tryptophan biosynthesis; L-tryptophan from chorismate: step 2/5. Catalyzes the transfer of the phosphoribosyl group of 5-phosphorylribose-1-pyrophosphate (PRPP) to anthranilate to yield N-(5'-phosphoribosyl)-anthranilate (PRA). This Synechococcus sp. (strain JA-3-3Ab) (Cyanobacteria bacterium Yellowstone A-Prime) protein is Anthranilate phosphoribosyltransferase.